The primary structure comprises 280 residues: MTWKIVTDSGCDLRSLTRQSKELRFERVPLTLQIGTEIFRDDDGLDIDNMMTTMYQSSKATTSSCPSPEAFLQAYRGADNVIVMTITGTLSGSHNSARLAKNELLEENPNVNIHLIDSLSAGGEMDLLVLELERLINLGLSFEEVVKQITAYQQKTRLIFVLAKVDNLVKNGRLSKLVGKVIGLLNIRMVGKASNKGTLELLQKARGQKKAVSALIEEIQKEGYVGGKVYIAHAQNPKICEQISEKIKSLYPDAVIQTGRTSGLCSFYAEDGGLLMGYEI.

The region spanning 3–280 is the DegV domain; the sequence is WKIVTDSGCD…DGGLLMGYEI (278 aa). Hexadecanoate-binding residues include Ser-63 and Ser-91.

Functionally, may bind long-chain fatty acids, such as palmitate, and may play a role in lipid transport or fatty acid metabolism. This is DegV domain-containing protein M6_Spy1440 from Streptococcus pyogenes serotype M6 (strain ATCC BAA-946 / MGAS10394).